Reading from the N-terminus, the 407-residue chain is MAYQEPNKDGFYGKFGGRFVPETLMTAVLELEKAYRESQADPSFQEELNQLLRQYVGRETPLYYAKNLTQHIGGAKIYLKREDLNHTGAHKINNALGQVWLAKRMGKKKIIAETGAGQHGVATATAAALFNMECTIYMGEEDVKRQALNVFRMELLGAKVEAVTDGSRVLKDAVNAALRSWVANIDDTHYILGSALGPHPFPEIVRDFQSVIGREAKQQYRDMTGQNLPDALVACVGGGSNAIGLFHPFVEDESVAMYGTEAAGLGVDTEHHAATLTKGRPGVLHGSLMDVLQDAHGQILEAFSISAGLDYPGIGPEHSHYHDIKRASYVPVTDEEALEGFQLLSRVEGIIPALESSHAIAFAVKLAKELGPEKSMIVCLSGRGDKDVVQVKDRLEADAAKKGEAHA.

Residue K91 is modified to N6-(pyridoxal phosphate)lysine.

The protein belongs to the TrpB family. Tetramer of two alpha and two beta chains. Pyridoxal 5'-phosphate is required as a cofactor.

The enzyme catalyses (1S,2R)-1-C-(indol-3-yl)glycerol 3-phosphate + L-serine = D-glyceraldehyde 3-phosphate + L-tryptophan + H2O. It participates in amino-acid biosynthesis; L-tryptophan biosynthesis; L-tryptophan from chorismate: step 5/5. Its function is as follows. The beta subunit is responsible for the synthesis of L-tryptophan from indole and L-serine. This is Tryptophan synthase beta chain from Streptococcus pneumoniae (strain Hungary19A-6).